A 75-amino-acid polypeptide reads, in one-letter code: Tautomerase PptA (75 aa).

The active-site Proton acceptor; via imino nitrogen is P2.

The protein belongs to the 4-oxalocrotonate tautomerase family. PptA subfamily. In terms of assembly, homodimer.

The protein localises to the cytoplasm. The protein is Tautomerase PptA of Escherichia coli O139:H28 (strain E24377A / ETEC).